The chain runs to 789 residues: Potassium transporter 4 (789 aa).

Residues 1-32 (MAPAESGVSPRRNPSQLSWMNLSSNLILAYQS) lie on the Cytoplasmic side of the membrane. Serine 9 carries the post-translational modification Phosphoserine. A helical membrane pass occupies residues 33–53 (FGVVYGDLSTSPLYVFPSTFI). Topologically, residues 54 to 68 (GKLHKHHNEDAVFGA) are extracellular. The chain crosses the membrane as a helical span at residues 69–89 (FSLIFWTLTLIPLLKYLLVLL). The Cytoplasmic portion of the chain corresponds to 90–154 (SADDNGEGGT…FLEKHKRLRT (65 aa)). Residues 155–175 (ALLLVVLFGAAMVIGDGVLTP) traverse the membrane as a helical segment. The Extracellular portion of the chain corresponds to 176 to 195 (ALSVLSSLSGLQATEKNVTD). Residues 196 to 216 (GELLVLACVILVGLFALQHCG) traverse the membrane as a helical segment. The Cytoplasmic segment spans residues 217 to 219 (THR). Residues 220–240 (VAFMFAPIVIIWLISIFFIGL) form a helical membrane-spanning segment. Topologically, residues 241-270 (YNIIRWNPKIIHAVSPLYIIKFFRVTGQDG) are extracellular. A helical transmembrane segment spans residues 271-291 (WISLGGVLLSVTGTEAMFANL). The Cytoplasmic portion of the chain corresponds to 292–300 (GHFTSVSIR). The helical transmembrane segment at 301 to 321 (VAFAVVVYPCLVVQYMGQAAF) threads the bilayer. Residues 322-340 (LSKNLGSIPNSFYDSVPDP) lie on the Extracellular side of the membrane. A helical membrane pass occupies residues 341–361 (VFWPVFVIATLAAIVGSQAVI). Topologically, residues 362-392 (TTTFSIIKQCHALGCFPRIKVVHTSKHIYGQ) are cytoplasmic. Residues 393 to 413 (IYIPEINWILMILTLAMAIGF) form a helical membrane-spanning segment. Topologically, residues 414 to 424 (RDTTLIGNAYG) are extracellular. Residues 425–445 (IACMVVMFITTFFMALVIVVV) traverse the membrane as a helical segment. At 446-450 (WQKSC) the chain is on the cytoplasmic side. The helical transmembrane segment at 451–471 (FLAALFLGTLWIIEGVYLSAA) threads the bilayer. At 472–478 (LMKVTEG) the chain is on the extracellular side. A helical membrane pass occupies residues 479-499 (GWVPFVLTFIFMIAMYVWHYG). At 500–789 (TRRKYSFDLH…LIEVGMIYYV (290 aa)) the chain is on the cytoplasmic side.

It belongs to the HAK/KUP transporter (TC 2.A.72.3) family. Detected at very low levels in roots, stems, leaves and flowers of mature plants and strongly expressed in the roots of potassium-starved plants.

It localises to the cell membrane. High-affinity potassium transporter. This Arabidopsis thaliana (Mouse-ear cress) protein is Potassium transporter 4 (POT4).